The primary structure comprises 651 residues: Acetyl-coenzyme A synthetase (651 aa).

CoA is bound by residues 190 to 193 (RRGK) and T311. ATP contacts are provided by residues 387–389 (GEP), 411–416 (DTWWQT), D508, and R523. S531 is a CoA binding site. R534 is an ATP binding site. V545, H547, and V550 together coordinate Mg(2+). K617 carries the post-translational modification N6-acetyllysine.

The protein belongs to the ATP-dependent AMP-binding enzyme family. Mg(2+) is required as a cofactor. Post-translationally, acetylated. Deacetylation by the SIR2-homolog deacetylase activates the enzyme.

The enzyme catalyses acetate + ATP + CoA = acetyl-CoA + AMP + diphosphate. In terms of biological role, catalyzes the conversion of acetate into acetyl-CoA (AcCoA), an essential intermediate at the junction of anabolic and catabolic pathways. AcsA undergoes a two-step reaction. In the first half reaction, AcsA combines acetate with ATP to form acetyl-adenylate (AcAMP) intermediate. In the second half reaction, it can then transfer the acetyl group from AcAMP to the sulfhydryl group of CoA, forming the product AcCoA. M.tuberculosis may use AcsA for both acetate and propionate assimilation. The chain is Acetyl-coenzyme A synthetase from Mycobacterium tuberculosis (strain CDC 1551 / Oshkosh).